A 143-amino-acid polypeptide reads, in one-letter code: Transcriptional regulator MraZ (143 aa).

2 SpoVT-AbrB domains span residues 5–47 and 76–119; these read TYTP…PRDE and TDEQ…DAQA.

Belongs to the MraZ family. As to quaternary structure, forms oligomers.

The protein localises to the cytoplasm. The protein resides in the nucleoid. The chain is Transcriptional regulator MraZ from Mycolicibacterium smegmatis (strain ATCC 700084 / mc(2)155) (Mycobacterium smegmatis).